Consider the following 133-residue polypeptide: Large ribosomal subunit protein bL17 (133 aa).

Belongs to the bacterial ribosomal protein bL17 family. Part of the 50S ribosomal subunit. Contacts protein L32.

This is Large ribosomal subunit protein bL17 from Ehrlichia chaffeensis (strain ATCC CRL-10679 / Arkansas).